We begin with the raw amino-acid sequence, 915 residues long: Probable dipeptidyl-aminopeptidase B (915 aa).

Disordered stretches follow at residues 1-20 and 52-74; these read MAGE…TRGS and QDSR…NEEE. Over 1–95 the chain is Cytoplasmic; the sequence is MAGEKGGSRD…GGKTVQKTTK (95 aa). Positions 55-72 are enriched in basic and acidic residues; that stretch reads RLGEKDQRDDDHDQYRNE. The chain crosses the membrane as a helical; Signal-anchor for type II membrane protein span at residues 96–116; that stretch reads IVLWALLFLCVGGWSLAFVIF. Residues 117–915 are Vacuolar-facing; that stretch reads LFRGHDTPQT…RAETWGGLPV (799 aa). Asparagine 133, asparagine 179, asparagine 349, and asparagine 572 each carry an N-linked (GlcNAc...) asparagine glycan. Residue serine 754 is the Charge relay system of the active site. Asparagine 813 is a glycosylation site (N-linked (GlcNAc...) asparagine). Active-site charge relay system residues include aspartate 831 and histidine 864. Asparagine 900 is a glycosylation site (N-linked (GlcNAc...) asparagine).

The protein belongs to the peptidase S9B family.

The protein localises to the vacuole membrane. The enzyme catalyses Release of an N-terminal dipeptide, Xaa-Yaa-|-Zaa-, from a polypeptide, preferentially when Yaa is Pro, provided Zaa is neither Pro nor hydroxyproline.. In terms of biological role, type IV dipeptidyl-peptidase which removes N-terminal dipeptides sequentially from polypeptides having unsubstituted N-termini provided that the penultimate residue is proline. This Blastomyces gilchristii (strain SLH14081) (Blastomyces dermatitidis) protein is Probable dipeptidyl-aminopeptidase B (DAPB).